The primary structure comprises 181 residues: Large ribosomal subunit protein uL5 (181 aa).

The protein belongs to the universal ribosomal protein uL5 family. In terms of assembly, part of the 50S ribosomal subunit; part of the 5S rRNA/L5/L18/L25 subcomplex. Contacts the 5S rRNA and the P site tRNA. Forms a bridge to the 30S subunit in the 70S ribosome.

This is one of the proteins that bind and probably mediate the attachment of the 5S RNA into the large ribosomal subunit, where it forms part of the central protuberance. In the 70S ribosome it contacts protein S13 of the 30S subunit (bridge B1b), connecting the 2 subunits; this bridge is implicated in subunit movement. Contacts the P site tRNA; the 5S rRNA and some of its associated proteins might help stabilize positioning of ribosome-bound tRNAs. In Nitrosococcus oceani (strain ATCC 19707 / BCRC 17464 / JCM 30415 / NCIMB 11848 / C-107), this protein is Large ribosomal subunit protein uL5.